Here is a 185-residue protein sequence, read N- to C-terminus: Nodulin-20 (185 aa).

The N-terminal stretch at 1-17 is a signal peptide; the sequence is MRVVLITLFLFIGAAVA.

Belongs to the nodulin 20 family.

It is found in the symbiosome. The protein resides in the peribacteroid membrane. The protein localises to the peribacteroid space. In Glycine max (Soybean), this protein is Nodulin-20.